A 205-amino-acid chain; its full sequence is Small ribosomal subunit protein uS5 (205 aa).

Residues 49–112 (LEDEVLDIAM…TKAKMNLVKV (64 aa)) enclose the S5 DRBM domain.

This sequence belongs to the universal ribosomal protein uS5 family. As to quaternary structure, part of the 30S ribosomal subunit. Contacts protein S4.

In terms of biological role, with S4 and S12 plays an important role in translational accuracy. This chain is Small ribosomal subunit protein uS5, found in Methanoregula boonei (strain DSM 21154 / JCM 14090 / 6A8).